Here is a 513-residue protein sequence, read N- to C-terminus: MASDTPGFYVDKLNKYSQIHKVKIIYKEISVTGPPHDRRFTFQVIIEEREFPEGEGRSKQEAKNNAAKLAVEILDNENKVDSHTDASEQGLIEGNYIGLVNSFAQKENLPVNFELCDPDSQLPHRFICKCKIGQTTYGTGFGANKKEAKQLAAKNAYQKLSEKSPSKTGFVTSLSSDFSSSSSITSNSASQSASGRDFEDIFMNGLREKRKSGVKVPSDDVLRNKYTLDDRFSKDFEDIEEIGSGGFGQVFKAKHRIDGKTYAIKRITYNTKKAKREVQALAELNHANIVQYRVCWEGEDYDYDPENSTNGDTSRYKTRCLFIQMEFCDKGTLQQWLEKRNRSQEDKALVLELFEQIVTGVDYIHSKGLIHRDLKPGNIFLVDEKHIKIGDFGLATALENDGNPRTKYTGTPQYMSPEQKSSLVEYGKEVDIFALGLILAELLHICKTDSEKIEFFQLLRNGIFSDDIFDNKEKSLLQKLLSSKPRERPNTSEILKTLAEWKNISEKKKRNTC.

Alanine 2 bears the N-acetylalanine mark. A DRBM 1 domain is found at 8-76 (FYVDKLNKYS…AKLAVEILDN (69 aa)). Lysine 68 is covalently cross-linked (Glycyl lysine isopeptide (Lys-Gly) (interchain with G-Cter in ISG15)). Phosphoserine is present on serine 82. A Phosphothreonine modification is found at threonine 84. One can recognise a DRBM 2 domain in the interval 95–162 (NYIGLVNSFA…AKNAYQKLSE (68 aa)). Tyrosine 96 is modified (phosphotyrosine; by autocatalysis). A Glycyl lysine isopeptide (Lys-Gly) (interchain with G-Cter in ISG15) cross-link involves residue lysine 154. Position 157 is a phosphotyrosine; by autocatalysis (tyrosine 157). Threonine 227 bears the Phosphothreonine mark. Residues 235–513 (DFEDIEEIGS…ISEKKKRNTC (279 aa)) form an interaction with TRAF5 region. The region spanning 236-502 (FEDIEEIGSG…EILKTLAEWK (267 aa)) is the Protein kinase domain. 242–250 (IGSGGFGQV) lines the ATP pocket. The residue at position 262 (tyrosine 262) is a Phosphotyrosine; by autocatalysis. An ATP-binding site is contributed by lysine 265. The Proton acceptor role is filled by aspartate 373. Threonine 406 and threonine 411 each carry phosphothreonine; by autocatalysis. A Phosphoserine modification is found at serine 416.

This sequence belongs to the protein kinase superfamily. Ser/Thr protein kinase family. GCN2 subfamily. Homodimer. Interacts with DNAJC3. Interacts with STRBP. Forms a complex with FANCA, FANCC, FANCG and HSP70. Interacts with ADAR/ADAR1. The inactive form interacts with NCK1 and GSN. Interacts (via the kinase catalytic domain) with STAT3 (via SH2 domain), TRAF2 (C-terminus), TRAF5 (C-terminus) and TRAF6 (C-terminus). Interacts with MAP2K6, IKBKB/IKKB, IRS1, NPM1, TARBP2, NLRP1, NLRP3, NLRC4 and AIM2. Interacts (via DRBM 1 domain) with DUS2L (via DRBM domain). Interacts with DHX9 (via N-terminus) and this interaction is dependent upon activation of the kinase. In terms of processing, autophosphorylated on several Ser, Thr and Tyr residues. Autophosphorylation of Thr-411 is dependent on Thr-406 and is stimulated by dsRNA binding and dimerization. Autophosphorylation apparently leads to the activation of the kinase. Tyrosine autophosphorylation is essential for efficient dsRNA-binding, dimerization, and kinase activation.

It localises to the cytoplasm. It is found in the nucleus. The protein resides in the perinuclear region. It carries out the reaction L-seryl-[protein] + ATP = O-phospho-L-seryl-[protein] + ADP + H(+). The catalysed reaction is L-threonyl-[protein] + ATP = O-phospho-L-threonyl-[protein] + ADP + H(+). It catalyses the reaction L-tyrosyl-[protein] + ATP = O-phospho-L-tyrosyl-[protein] + ADP + H(+). Its activity is regulated as follows. Initially produced in an inactive form and is activated by binding to viral dsRNA, which causes dimerization and autophosphorylation in the activation loop and stimulation of function. ISGylation can activate it in the absence of viral infection. Can also be activated by heparin, pro-inflammatory stimuli, growth factors, cytokines, oxidative stress and the cellular protein PRKRA. Activity is markedly stimulated by manganese ions. Activation is blocked by the cellular proteins TARBP2, DUS2L, NPM1, NCK1 and ADAR. In terms of biological role, IFN-induced dsRNA-dependent serine/threonine-protein kinase that phosphorylates the alpha subunit of eukaryotic translation initiation factor 2 (EIF2S1/eIF-2-alpha) and plays a key role in the innate immune response to viral infection. Inhibits viral replication via the integrated stress response (ISR): EIF2S1/eIF-2-alpha phosphorylation in response to viral infection converts EIF2S1/eIF-2-alpha in a global protein synthesis inhibitor, resulting to a shutdown of cellular and viral protein synthesis, while concomitantly initiating the preferential translation of ISR-specific mRNAs, such as the transcriptional activator ATF4. Exerts its antiviral activity on a wide range of DNA and RNA viruses. Also involved in the regulation of signal transduction, apoptosis, cell proliferation and differentiation: phosphorylates other substrates including p53/TP53, PPP2R5A, DHX9, ILF3 and IRS1. In addition to serine/threonine-protein kinase activity, also has tyrosine-protein kinase activity and phosphorylates CDK1 at 'Tyr-4' upon DNA damage, facilitating its ubiquitination and proteasomal degradation. Either as an adapter protein and/or via its kinase activity, can regulate various signaling pathways (p38 MAP kinase, NF-kappa-B and insulin signaling pathways) and transcription factors (JUN, STAT1, STAT3, IRF1, ATF3) involved in the expression of genes encoding pro-inflammatory cytokines and IFNs. Activates the NF-kappa-B pathway via interaction with IKBKB and TRAF family of proteins and activates the p38 MAP kinase pathway via interaction with MAP2K6. Can act as both a positive and negative regulator of the insulin signaling pathway (ISP). Negatively regulates ISP by inducing the inhibitory phosphorylation of insulin receptor substrate 1 (IRS1) at 'Ser-312' and positively regulates ISP via phosphorylation of PPP2R5A which activates FOXO1, which in turn up-regulates the expression of insulin receptor substrate 2 (IRS2). Can regulate NLRP3 inflammasome assembly and the activation of NLRP3, NLRP1, AIM2 and NLRC4 inflammasomes. Plays a role in the regulation of the cytoskeleton by binding to gelsolin (GSN), sequestering the protein in an inactive conformation away from actin. This is Interferon-induced, double-stranded RNA-activated protein kinase (Eif2ak2) from Rattus norvegicus (Rat).